The following is a 400-amino-acid chain: Acetate kinase (400 aa).

N10 lines the Mg(2+) pocket. Residue K17 participates in ATP binding. R91 provides a ligand contact to substrate. D150 acts as the Proton donor/acceptor in catalysis. ATP contacts are provided by residues 210 to 214, 285 to 287, and 333 to 337; these read HLGNG, DCR, and GIGEN. A Mg(2+)-binding site is contributed by E387.

It belongs to the acetokinase family. Homodimer. Mg(2+) is required as a cofactor. It depends on Mn(2+) as a cofactor.

The protein resides in the cytoplasm. The catalysed reaction is acetate + ATP = acetyl phosphate + ADP. The protein operates within metabolic intermediate biosynthesis; acetyl-CoA biosynthesis; acetyl-CoA from acetate: step 1/2. Functionally, catalyzes the formation of acetyl phosphate from acetate and ATP. Can also catalyze the reverse reaction. The polypeptide is Acetate kinase (Yersinia pseudotuberculosis serotype I (strain IP32953)).